A 135-amino-acid polypeptide reads, in one-letter code: Probable transcription factor At2g20613 (135 aa).

The disordered stretch occupies residues 1-104 (MSHKRFNPLT…KRGGGGGEEA (104 aa)). Acidic residues predominate over residues 28–41 (DSSSDEETDSDSDS). Over residues 62–80 (KSVKISEKSVAKRSRETHE) the composition is skewed to basic and acidic residues.

It belongs to the GeBP family.

In Arabidopsis thaliana (Mouse-ear cress), this protein is Probable transcription factor At2g20613.